Reading from the N-terminus, the 596-residue chain is Sensor protein ChvG (596 aa).

The interval 1–22 (MLKKTPETVSDSDDAEERGSER) is disordered. At 1–47 (MLKKTPETVSDSDDAEERGSERRHRIHPLTIIRRIFGNAVFSSLTRR) the chain is on the cytoplasmic side. The chain crosses the membrane as a helical span at residues 48–68 (ILFFNVAATVVLVGGILYLNQ). Over 69 to 283 (FREGLIDARV…VHAERLAIMR (215 aa)) the chain is Periplasmic. Residues 284–304 (VFGIATLVNIVLSLLLSSTIA) form a helical membrane-spanning segment. The HAMP domain occupies 301 to 356 (STIATPLRRLSAAAIRVRRGARTREEIPDFSARQDEIGNLSIALREMTTALYDRID). Residues 305–596 (TPLRRLSAAA…SLPAAETHER (292 aa)) are Cytoplasmic-facing. In terms of domain architecture, Histidine kinase spans 364-592 (DVSHELKNPL…RFTLSLPAAE (229 aa)). His367 is subject to Phosphohistidine.

It localises to the cell inner membrane. It catalyses the reaction ATP + protein L-histidine = ADP + protein N-phospho-L-histidine.. In terms of biological role, member of a two-component regulatory system ChvG/ChvI. Activates ChvI by phosphorylation (Potential). This chain is Sensor protein ChvG (chvG), found in Agrobacterium fabrum (strain C58 / ATCC 33970) (Agrobacterium tumefaciens (strain C58)).